Consider the following 170-residue polypeptide: Ribosome maturation factor RimM (170 aa).

Residues 97–170 (HPDEYYWVDL…RIVVDWDPEF (74 aa)) form the PRC barrel domain.

The protein belongs to the RimM family. Binds ribosomal protein uS19.

The protein localises to the cytoplasm. In terms of biological role, an accessory protein needed during the final step in the assembly of 30S ribosomal subunit, possibly for assembly of the head region. Essential for efficient processing of 16S rRNA. May be needed both before and after RbfA during the maturation of 16S rRNA. It has affinity for free ribosomal 30S subunits but not for 70S ribosomes. The polypeptide is Ribosome maturation factor RimM (Xylella fastidiosa (strain M12)).